Here is a 156-residue protein sequence, read N- to C-terminus: V-type proton ATPase 16 kDa proteolipid subunit c (156 aa).

At 1–7 the chain is on the lumenal side; sequence MAENPIY. The helical transmembrane segment at 8 to 30 threads the bilayer; it reads GPFFGVMGAASAIIFSALGAAYG. Residues 31–52 lie on the Cytoplasmic side of the membrane; the sequence is TAKSGTGIAAMSVMRPELIMKS. Residues 53-73 form a helical membrane-spanning segment; it reads IIPVVMAGIIAIYGLVVAVLI. The Lumenal segment spans residues 74–92; the sequence is AGSLDSPSNNYTLYRGFIH. Residues 93 to 114 form a helical membrane-spanning segment; sequence LGAGLAVGFSGLAAGFAIGIVG. The Cytoplasmic portion of the chain corresponds to 115–126; it reads DAGVRGTAQQPR. The chain crosses the membrane as a helical span at residues 127–152; that stretch reads LFVGMILILIFAEVLGLYGLIVAIYL. The Lumenal segment spans residues 153–156; sequence YTKQ.

Belongs to the V-ATPase proteolipid subunit family. V-ATPase is a heteromultimeric enzyme made up of two complexes: the ATP-hydrolytic V1 complex and the proton translocation V0 complex. The V1 complex consists of three catalytic AB heterodimers that form a heterohexamer, three peripheral stalks each consisting of EG heterodimers, one central rotor including subunits D and F, and the regulatory subunits C and H. The proton translocation complex V0 consists of the proton transport subunit a, a ring of proteolipid subunits c9c'', rotary subunit d, subunits e and f, and the accessory subunits VhaAC45 and ATP6AP2.

It is found in the membrane. Its function is as follows. Proton-conducting pore forming subunit of the V0 complex of vacuolar(H+)-ATPase (V-ATPase), a multisubunit enzyme composed of a peripheral complex (V1) that hydrolyzes ATP and a membrane integral complex (V0) that translocates protons. V-ATPase is responsible for acidifying and maintaining the pH of intracellular compartments and in some cell types, is targeted to the plasma membrane, where it is responsible for acidifying the extracellular environment. This Manduca sexta (Tobacco hawkmoth) protein is V-type proton ATPase 16 kDa proteolipid subunit c (VHA16).